Here is a 471-residue protein sequence, read N- to C-terminus: Probable multidrug-efflux transporter MT1670 (471 aa).

The next 14 membrane-spanning stretches (helical) occupy residues 23–43 (IVLAGGVALYATNEFLTISLL), 55–75 (LYAWVTTLYLVGSVVAATTVN), 91–111 (LAVFGLASLVCAAAPSMQILV), 116–136 (LQGIAGGLLAGLGYALINSTL), 146–166 (ALVSAMWGVATLIGPATGGLF), 174–194 (WAFGVMTLLTALMAMLVPVAL), 213–233 (VPVWSLLLMGAAALAISVAAL), 237–257 (LVQTAGLLAAAALLVAVFVVV), 279–299 (IYLTMSVQMIAAMVDTYVPLF), 308–328 (PVAAGFLGAALAVGWTVGEVA), 337–357 (VIGHVVAAAPLVMASGLALGA), 366–386 (VGIIALWALALLIIGTGIGIA), 410–430 (AINVVQLISGAFGAGLAGVVV), and 438–458 (VAAARGLYMAFTVLAAAGVIA).

This sequence belongs to the major facilitator superfamily.

The protein localises to the cell membrane. Functionally, could be involved in fluoroquinolones efflux. This is Probable multidrug-efflux transporter MT1670 from Mycobacterium tuberculosis (strain CDC 1551 / Oshkosh).